We begin with the raw amino-acid sequence, 470 residues long: Argininosuccinate lyase (470 aa).

The protein belongs to the lyase 1 family. Argininosuccinate lyase subfamily.

It is found in the cytoplasm. The catalysed reaction is 2-(N(omega)-L-arginino)succinate = fumarate + L-arginine. The protein operates within amino-acid biosynthesis; L-arginine biosynthesis; L-arginine from L-ornithine and carbamoyl phosphate: step 3/3. The sequence is that of Argininosuccinate lyase from Mycobacterium tuberculosis (strain CDC 1551 / Oshkosh).